Consider the following 155-residue polypeptide: Cytochrome c oxidase subunit 4, mitochondrial (155 aa).

A mitochondrion-targeting transit peptide spans 1-25 (MLSLRQSIRFFKPATRTLCSSRYLL). Thr-55 carries the post-translational modification Phosphothreonine. The Zn(2+) site is built by Cys-111, His-119, Cys-134, and Cys-137.

The protein belongs to the cytochrome c oxidase subunit 5B family. In terms of assembly, component of the cytochrome c oxidase (complex IV, CIV), a multisubunit enzyme composed of 12 subunits. The complex is composed of a catalytic core of 3 subunits COX1, COX2 and COX3, encoded in the mitochondrial DNA, and 9 supernumerary subunits COX4, COX5A (or COX5B), COX6, COX7, COX8, COX9, COX12, COX13 and COX26, which are encoded in the nuclear genome. The complex exists as a monomer or a dimer and forms supercomplexes (SCs) in the inner mitochondrial membrane with a dimer of ubiquinol-cytochrome c oxidoreductase (cytochrome b-c1 complex, complex III, CIII), resulting in 2 different assemblies (supercomplexes III(2)IV and III(2)IV(2)).

The protein localises to the mitochondrion inner membrane. It functions in the pathway energy metabolism; oxidative phosphorylation. Functionally, component of the cytochrome c oxidase, the last enzyme in the mitochondrial electron transport chain which drives oxidative phosphorylation. The respiratory chain contains 3 multisubunit complexes succinate dehydrogenase (complex II, CII), ubiquinol-cytochrome c oxidoreductase (cytochrome b-c1 complex, complex III, CIII) and cytochrome c oxidase (complex IV, CIV), that cooperate to transfer electrons derived from NADH and succinate to molecular oxygen, creating an electrochemical gradient over the inner membrane that drives transmembrane transport and the ATP synthase. Cytochrome c oxidase is the component of the respiratory chain that catalyzes the reduction of oxygen to water. Electrons originating from reduced cytochrome c in the intermembrane space (IMS) are transferred via the dinuclear copper A center (CU(A)) of COX2 and heme A of COX1 to the active site in COX1, a binuclear center (BNC) formed by heme A3 and copper B (CU(B)). The BNC reduces molecular oxygen to 2 water molecules using 4 electrons from cytochrome c in the IMS and 4 protons from the mitochondrial matrix. The polypeptide is Cytochrome c oxidase subunit 4, mitochondrial (COX4) (Saccharomyces cerevisiae (strain ATCC 204508 / S288c) (Baker's yeast)).